A 132-amino-acid polypeptide reads, in one-letter code: Small ribosomal subunit protein uS8 (132 aa).

This sequence belongs to the universal ribosomal protein uS8 family. As to quaternary structure, part of the 30S ribosomal subunit. Contacts proteins S5 and S12.

Functionally, one of the primary rRNA binding proteins, it binds directly to 16S rRNA central domain where it helps coordinate assembly of the platform of the 30S subunit. The chain is Small ribosomal subunit protein uS8 from Cereibacter sphaeroides (strain ATCC 17025 / ATH 2.4.3) (Rhodobacter sphaeroides).